The following is an 874-amino-acid chain: Alanine--tRNA ligase (874 aa).

Residues His562, His566, Cys664, and His668 each coordinate Zn(2+).

Belongs to the class-II aminoacyl-tRNA synthetase family. It depends on Zn(2+) as a cofactor.

It is found in the cytoplasm. The catalysed reaction is tRNA(Ala) + L-alanine + ATP = L-alanyl-tRNA(Ala) + AMP + diphosphate. Functionally, catalyzes the attachment of alanine to tRNA(Ala) in a two-step reaction: alanine is first activated by ATP to form Ala-AMP and then transferred to the acceptor end of tRNA(Ala). Also edits incorrectly charged Ser-tRNA(Ala) and Gly-tRNA(Ala) via its editing domain. In Neisseria gonorrhoeae (strain ATCC 700825 / FA 1090), this protein is Alanine--tRNA ligase.